The primary structure comprises 495 residues: Flagellin (495 aa).

It belongs to the bacterial flagellin family.

The protein resides in the secreted. It is found in the bacterial flagellum. Flagellin is the subunit protein which polymerizes to form the filaments of bacterial flagella. This is Flagellin (fliC) from Salmonella paratyphi A (strain ATCC 9150 / SARB42).